Consider the following 311-residue polypeptide: Acetyl-coenzyme A carboxylase carboxyl transferase subunit alpha (311 aa).

A CoA carboxyltransferase C-terminal domain is found at Asn-36–Glu-286.

Belongs to the AccA family. As to quaternary structure, acetyl-CoA carboxylase is a heterohexamer composed of biotin carboxyl carrier protein (AccB), biotin carboxylase (AccC) and two subunits each of ACCase subunit alpha (AccA) and ACCase subunit beta (AccD).

The protein localises to the cytoplasm. It carries out the reaction N(6)-carboxybiotinyl-L-lysyl-[protein] + acetyl-CoA = N(6)-biotinyl-L-lysyl-[protein] + malonyl-CoA. The protein operates within lipid metabolism; malonyl-CoA biosynthesis; malonyl-CoA from acetyl-CoA: step 1/1. In terms of biological role, component of the acetyl coenzyme A carboxylase (ACC) complex. First, biotin carboxylase catalyzes the carboxylation of biotin on its carrier protein (BCCP) and then the CO(2) group is transferred by the carboxyltransferase to acetyl-CoA to form malonyl-CoA. The polypeptide is Acetyl-coenzyme A carboxylase carboxyl transferase subunit alpha (Campylobacter lari (strain RM2100 / D67 / ATCC BAA-1060)).